We begin with the raw amino-acid sequence, 495 residues long: uncharacterized protein (495 aa).

Residues S16, E36, W45, D56, Y62, and V105 each coordinate FAD.

It belongs to the FAD-binding monooxygenase family. FAD is required as a cofactor.

This is an uncharacterized protein from Mycobacterium tuberculosis (strain CDC 1551 / Oshkosh).